The chain runs to 155 residues: 6,7-dimethyl-8-ribityllumazine synthase (155 aa).

Residues Phe-23, 57–59 (AFE), and 83–85 (AVI) contribute to the 5-amino-6-(D-ribitylamino)uracil site. 88–89 (AT) is a binding site for (2S)-2-hydroxy-3-oxobutyl phosphate. Residue His-91 is the Proton donor of the active site. Residue Phe-114 participates in 5-amino-6-(D-ribitylamino)uracil binding. A (2S)-2-hydroxy-3-oxobutyl phosphate-binding site is contributed by Arg-128.

Belongs to the DMRL synthase family.

The enzyme catalyses (2S)-2-hydroxy-3-oxobutyl phosphate + 5-amino-6-(D-ribitylamino)uracil = 6,7-dimethyl-8-(1-D-ribityl)lumazine + phosphate + 2 H2O + H(+). Its pathway is cofactor biosynthesis; riboflavin biosynthesis; riboflavin from 2-hydroxy-3-oxobutyl phosphate and 5-amino-6-(D-ribitylamino)uracil: step 1/2. In terms of biological role, catalyzes the formation of 6,7-dimethyl-8-ribityllumazine by condensation of 5-amino-6-(D-ribitylamino)uracil with 3,4-dihydroxy-2-butanone 4-phosphate. This is the penultimate step in the biosynthesis of riboflavin. This is 6,7-dimethyl-8-ribityllumazine synthase from Leptospira biflexa serovar Patoc (strain Patoc 1 / Ames).